The following is a 235-amino-acid chain: tRNA (guanine-N(1)-)-methyltransferase (235 aa).

S-adenosyl-L-methionine contacts are provided by residues Gly113 and 133–138 (IGDYIL).

This sequence belongs to the RNA methyltransferase TrmD family. In terms of assembly, homodimer.

Its subcellular location is the cytoplasm. It catalyses the reaction guanosine(37) in tRNA + S-adenosyl-L-methionine = N(1)-methylguanosine(37) in tRNA + S-adenosyl-L-homocysteine + H(+). In terms of biological role, specifically methylates guanosine-37 in various tRNAs. This is tRNA (guanine-N(1)-)-methyltransferase from Wolbachia sp. subsp. Brugia malayi (strain TRS).